A 213-amino-acid polypeptide reads, in one-letter code: ATP-dependent Clp protease proteolytic subunit 3 (213 aa).

Ser107 (nucleophile) is an active-site residue. His132 is an active-site residue.

This sequence belongs to the peptidase S14 family. In terms of assembly, fourteen ClpP subunits assemble into 2 heptameric rings which stack back to back to give a disk-like structure with a central cavity, resembling the structure of eukaryotic proteasomes.

The protein resides in the cytoplasm. It carries out the reaction Hydrolysis of proteins to small peptides in the presence of ATP and magnesium. alpha-casein is the usual test substrate. In the absence of ATP, only oligopeptides shorter than five residues are hydrolyzed (such as succinyl-Leu-Tyr-|-NHMec, and Leu-Tyr-Leu-|-Tyr-Trp, in which cleavage of the -Tyr-|-Leu- and -Tyr-|-Trp bonds also occurs).. Its function is as follows. Cleaves peptides in various proteins in a process that requires ATP hydrolysis. Has a chymotrypsin-like activity. Plays a major role in the degradation of misfolded proteins. This chain is ATP-dependent Clp protease proteolytic subunit 3, found in Frankia casuarinae (strain DSM 45818 / CECT 9043 / HFP020203 / CcI3).